Reading from the N-terminus, the 450-residue chain is Glucose-6-phosphate isomerase (450 aa).

T39 is subject to Phosphothreonine. E291 acts as the Proton donor in catalysis. Residues H312 and K426 contribute to the active site.

The protein belongs to the GPI family.

It is found in the cytoplasm. The catalysed reaction is alpha-D-glucose 6-phosphate = beta-D-fructose 6-phosphate. Its pathway is carbohydrate biosynthesis; gluconeogenesis. It participates in carbohydrate degradation; glycolysis; D-glyceraldehyde 3-phosphate and glycerone phosphate from D-glucose: step 2/4. Its function is as follows. Catalyzes the reversible isomerization of glucose-6-phosphate to fructose-6-phosphate. The polypeptide is Glucose-6-phosphate isomerase (Bacillus thuringiensis (strain Al Hakam)).